The primary structure comprises 262 residues: Putative glutamine--fructose-6-phosphate aminotransferase [isomerizing] (262 aa).

Cys2 acts as the Nucleophile; for GATase activity in catalysis. One can recognise a Glutamine amidotransferase type-2 domain in the interval 2-262 (CGIFGYCNFL…RKSPPFVHNT (261 aa)).

It carries out the reaction D-fructose 6-phosphate + L-glutamine = D-glucosamine 6-phosphate + L-glutamate. It participates in nucleotide-sugar biosynthesis; UDP-N-acetyl-alpha-D-glucosamine biosynthesis; alpha-D-glucosamine 6-phosphate from D-fructose 6-phosphate: step 1/1. In terms of biological role, involved in amino sugar synthesis (formation of chitin, supplies the amino sugars of asparagine-linked oligosaccharides of glycoproteins). The sequence is that of Putative glutamine--fructose-6-phosphate aminotransferase [isomerizing] from Saccharomyces cerevisiae (strain ATCC 204508 / S288c) (Baker's yeast).